A 200-amino-acid chain; its full sequence is Large ribosomal subunit protein uL4 (200 aa).

Positions 43–71 (RAQKTRAEVSGSGKKPWRQKGTGRARSGD) are disordered.

The protein belongs to the universal ribosomal protein uL4 family. In terms of assembly, part of the 50S ribosomal subunit.

One of the primary rRNA binding proteins, this protein initially binds near the 5'-end of the 23S rRNA. It is important during the early stages of 50S assembly. It makes multiple contacts with different domains of the 23S rRNA in the assembled 50S subunit and ribosome. In terms of biological role, forms part of the polypeptide exit tunnel. This is Large ribosomal subunit protein uL4 from Histophilus somni (strain 129Pt) (Haemophilus somnus).